The following is a 594-amino-acid chain: RAS guanyl-releasing protein 2-B (594 aa).

The N-terminal Ras-GEF domain occupies 3-121 (SSDLDKGLTI…SLIDIESVPS (119 aa)). The region spanning 149–382 (DPAELAEHLT…YQLSLQREPR (234 aa)) is the Ras-GEF domain. The interval 377-403 (LQREPRARSTQTHAKSPPSPSPPLEEW) is disordered. EF-hand domains lie at 418–453 (HIEKMVESVFRLFDEDGDGHISQEEFQSVRSNFPYL) and 455–482 (AFNEIDQNQDGKISKQEMTSYFLRASSV). Ca(2+)-binding residues include aspartate 431, aspartate 433, aspartate 435, histidine 437, glutamate 442, aspartate 460, asparagine 462, aspartate 464, lysine 466, and glutamate 471. A Phorbol-ester/DAG-type zinc finger spans residues 490–540 (IHNFAERTFLRPVSCQHCRNLILGIYKKGLKCKACGITCHKHCRDHLSIEC).

Belongs to the RASGRP family.

The protein resides in the cytoplasm. It is found in the cytosol. The protein localises to the cell membrane. It localises to the synapse. Its subcellular location is the synaptosome. In terms of biological role, functions as a calcium- and DAG-regulated nucleotide exchange factor specifically activating Rap through the exchange of bound GDP for GTP. May function in cell aggregation and adhesion. The chain is RAS guanyl-releasing protein 2-B (rasgrp2-b) from Xenopus laevis (African clawed frog).